The following is a 577-amino-acid chain: Methionine--tRNA ligase (577 aa).

The short motif at 21–31 (PYANGPLHVGH) is the 'HIGH' region element. Zn(2+) contacts are provided by Cys153, Cys156, Cys166, and Cys169. The 'KMSKS' region signature appears at 355 to 359 (QMSTS). ATP is bound at residue Thr358.

The protein belongs to the class-I aminoacyl-tRNA synthetase family. MetG type 1 subfamily. In terms of assembly, monomer. Requires Zn(2+) as cofactor.

Its subcellular location is the cytoplasm. It catalyses the reaction tRNA(Met) + L-methionine + ATP = L-methionyl-tRNA(Met) + AMP + diphosphate. Is required not only for elongation of protein synthesis but also for the initiation of all mRNA translation through initiator tRNA(fMet) aminoacylation. The chain is Methionine--tRNA ligase from Rubrobacter xylanophilus (strain DSM 9941 / JCM 11954 / NBRC 16129 / PRD-1).